A 499-amino-acid polypeptide reads, in one-letter code: Glutelin type-A 2 (499 aa).

A signal peptide spans 1–24; sequence MASINRPIVFFTVCLFLLCDGSLA. Cystine bridges form between Cys46–Cys79 and Cys122–Cys313. Residues 51 to 248 form the Cupin type-1 1 domain; the sequence is LQAFEPIRSV…AFGISNQVAR (198 aa). The segment at 280–300 is disordered; the sequence is EQGQMQSREHYQEGGYQQSQY. The Cupin type-1 2 domain maps to 319 to 468; sequence QNIDNPNRAD…AYRISREEAQ (150 aa).

The protein belongs to the 11S seed storage protein (globulins) family. Hexamer; each subunit is composed of an acidic and a basic chain derived from a single precursor and linked by a disulfide bond.

In terms of biological role, seed storage protein. The sequence is that of Glutelin type-A 2 (GLUA2) from Oryza sativa subsp. japonica (Rice).